Consider the following 341-residue polypeptide: N-acetyl-gamma-glutamyl-phosphate reductase (341 aa).

Cys147 is a catalytic residue.

It belongs to the NAGSA dehydrogenase family. Type 1 subfamily.

It localises to the cytoplasm. It catalyses the reaction N-acetyl-L-glutamate 5-semialdehyde + phosphate + NADP(+) = N-acetyl-L-glutamyl 5-phosphate + NADPH + H(+). Its pathway is amino-acid biosynthesis; L-arginine biosynthesis; N(2)-acetyl-L-ornithine from L-glutamate: step 3/4. In terms of biological role, catalyzes the NADPH-dependent reduction of N-acetyl-5-glutamyl phosphate to yield N-acetyl-L-glutamate 5-semialdehyde. The protein is N-acetyl-gamma-glutamyl-phosphate reductase of Staphylococcus epidermidis (strain ATCC 35984 / DSM 28319 / BCRC 17069 / CCUG 31568 / BM 3577 / RP62A).